Reading from the N-terminus, the 292-residue chain is MNPFWSMSTSSVRKRSEGEEKTLTGDVKTSPPRTAPKKQLPSIPKNALPITKPTSPAPAAQSTNGTHASYGPFYLEYSLLAEFTLVVKQKLPGVYVQPSYRSALMWFGVIFIRHGLYQDGVFKFTVYIPDNYPDGDCPRLVFDIPVFHPLVDPTSGELDVKRAFAKWRRNHNHIWQVLMYARRVFYKIDTASPLNPEAAVLYEKDIQLFKSKVVDSVKVCTARLFDQPKIEDPYAISFSPWNPSVHDEAREKMLTQKKPEEQHNKSVHVAGLSWVKPGSVQPFSKEEKTVAT.

Residues 1–11 are compositionally biased toward polar residues; the sequence is MNPFWSMSTSS. The disordered stretch occupies residues 1-63; the sequence is MNPFWSMSTS…TSPAPAAQST (63 aa). Positions 14-23 are enriched in basic and acidic residues; the sequence is KRSEGEEKTL. Ser30 carries the phosphoserine modification. Residues 74–222 form the UBC core domain; sequence YLEYSLLAEF…VVDSVKVCTA (149 aa).

This sequence belongs to the ubiquitin-conjugating enzyme family. FTS subfamily. Component of the FTS/Hook/FHIP complex (FHF complex), composed of AKTIP/FTS, FHIP1B, and one or more members of the Hook family of proteins HOOK1, HOOK2, and HOOK3. Interacts directly with HOOK1, HOOK2 and HOOK3. The FHF complex associates with the homotypic vesicular sorting complex (the HOPS complex). Also interacts with AKT1. May interact with FHIP1A.

It localises to the cytoplasm. It is found in the cell membrane. Its function is as follows. Component of the FTS/Hook/FHIP complex (FHF complex). The FHF complex may function to promote vesicle trafficking and/or fusion via the homotypic vesicular protein sorting complex (the HOPS complex). Regulates apoptosis by enhancing phosphorylation and activation of AKT1. Increases release of TNFSF6 via the AKT1/GSK3B/NFATC1 signaling cascade. FHF complex promotes the distribution of AP-4 complex to the perinuclear area of the cell. This chain is AKT-interacting protein, found in Homo sapiens (Human).